Here is a 373-residue protein sequence, read N- to C-terminus: Structure-specific endonuclease subunit EME2 (373 aa).

Residues 24 to 52 (RPQTWEISDSDGEGVPAREVGTQAPSPAG) form a disordered region. Residues 47 to 260 (APSPAGERRA…LPSKQHRDSQ (214 aa)) are nuclease-like domain; forms the post-nick DNA binding interface and is involved in DNA recognition and bending. Residues 282–373 (GLRGVWWRQI…NPDLLLDLSS (92 aa)) form a helix-hairpin-helix (2HhH); forms the pre-nick DNA binding interface and is involved in DNA recognition and bending region.

Belongs to the EME1/MMS4 family. As to quaternary structure, part of the heterodimeric MUS81-EME2 complex; the complex forms specifically during the DNA replication phase of the cell cycle.

Its subcellular location is the nucleus. Functionally, non-catalytic subunit of the structure-specific, heterodimeric DNA endonuclease MUS81-EME2 which is involved in the maintenance of genome stability. In the complex, EME2 is required for DNA cleavage, participating in DNA recognition and bending. MUS81-EME2 cleaves 3'-flaps and nicked Holliday junctions, and exhibit limited endonuclease activity with 5' flaps and nicked double-stranded DNAs. MUS81-EME2 which is active during the replication of DNA is more specifically involved in replication fork processing. Replication forks frequently encounter obstacles to their passage, including DNA base lesions, DNA interstrand cross-links, difficult-to-replicate sequences, transcription bubbles, or tightly bound proteins. One mechanism for the restart of a stalled replication fork involves nucleolytic cleavage mediated by the MUS81-EME2 endonuclease. By acting upon the stalled fork, MUS81-EME2 generates a DNA double-strand break (DSB) that can be repaired by homologous recombination, leading to the restoration of an active fork. MUS81-EME2 could also function in telomere maintenance. In Mus musculus (Mouse), this protein is Structure-specific endonuclease subunit EME2.